A 148-amino-acid chain; its full sequence is Single-stranded DNA-binding protein 2 (148 aa).

Positions 4–109 (INSVIIAGNL…IKARRIQFLN (106 aa)) constitute an SSB domain.

As to quaternary structure, homotetramer.

This is Single-stranded DNA-binding protein 2 (ssb2) from Chlorobaculum tepidum (strain ATCC 49652 / DSM 12025 / NBRC 103806 / TLS) (Chlorobium tepidum).